We begin with the raw amino-acid sequence, 584 residues long: Arginine--tRNA ligase (584 aa).

Residues 125–135 (PNIAKEMHVGH) carry the 'HIGH' region motif.

The protein belongs to the class-I aminoacyl-tRNA synthetase family. As to quaternary structure, monomer.

Its subcellular location is the cytoplasm. It catalyses the reaction tRNA(Arg) + L-arginine + ATP = L-arginyl-tRNA(Arg) + AMP + diphosphate. The chain is Arginine--tRNA ligase from Thermosynechococcus vestitus (strain NIES-2133 / IAM M-273 / BP-1).